A 378-amino-acid chain; its full sequence is MNIWLNMLTTTGLGAIIGGYTNHLAIKMLFRPHRPIYIGKFQVPFTPGLIPKRRDELAVQLGKMVVEHLLTPEGIGKKLTNEEFQKGLIHWAQVEVDKVITNEQSLRHMLEKWNVAHVEEEATRKIEHVITEKIHAFLAEYYTYTWEQALPHSVNEKVENAIPNVSAFILERGISFFESEEGKARLSKMIDDFFASRGTLLNLVGMFLGNVSVVDRVQPEVIKFLGQDATKQLLTDVLQKEWEKLKGRDVKELEAFVEKEMIVSSVLSAVKVEETVSKFLNQSVQQVCEPVRETIIEKVVPSAVAKGLKWGTENVESILNNLHLAEIVQQEVSTFSTERLEDLVLSITKNELKMITYLGALLGGMIGLVQGLLLLFLR.

The helical transmembrane segment at 357-377 (YLGALLGGMIGLVQGLLLLFL) threads the bilayer.

This sequence belongs to the UPF0754 family.

Its subcellular location is the cell membrane. The protein is UPF0754 membrane protein BC_0879 of Bacillus cereus (strain ATCC 14579 / DSM 31 / CCUG 7414 / JCM 2152 / NBRC 15305 / NCIMB 9373 / NCTC 2599 / NRRL B-3711).